A 465-amino-acid chain; its full sequence is Methionine aminopeptidase 2-2 (465 aa).

The span at 1 to 13 (MGSKTPNDHRRGP) shows a compositional bias: basic and acidic residues. A disordered region spans residues 1 to 92 (MGSKTPNDHR…KKKTLLGGLQ (92 aa)). A compositionally biased stretch (acidic residues) spans 44–55 (GETEDGEDEDDD). Positions 71 to 86 (TKKKNKRKKNKKKKKT) are enriched in basic residues. Residue His217 coordinates substrate. Residues Asp238, Asp249, and His318 each coordinate a divalent metal cation. His326 is a binding site for substrate. A divalent metal cation is bound by residues Glu351 and Glu446.

It belongs to the peptidase M24A family. Methionine aminopeptidase eukaryotic type 2 subfamily. The cofactor is Co(2+). Zn(2+) serves as cofactor. Requires Mn(2+) as cofactor. Fe(2+) is required as a cofactor.

It localises to the cytoplasm. It catalyses the reaction Release of N-terminal amino acids, preferentially methionine, from peptides and arylamides.. In terms of biological role, cotranslationally removes the N-terminal methionine from nascent proteins. The N-terminal methionine is often cleaved when the second residue in the primary sequence is small and uncharged (Met-Ala-, Cys, Gly, Pro, Ser, Thr, or Val). The chain is Methionine aminopeptidase 2-2 from Ajellomyces dermatitidis (strain ER-3 / ATCC MYA-2586) (Blastomyces dermatitidis).